The following is a 436-amino-acid chain: GTPase Der (436 aa).

EngA-type G domains lie at 4-167 (PVIA…PKIE) and 176-351 (IRFS…ESHS). GTP contacts are provided by residues 10 to 17 (GRPNVGKS), 57 to 61 (DTGGI), 119 to 122 (NKVD), 182 to 189 (GRPNVGKS), 229 to 233 (DTAGM), and 294 to 297 (NKWD). Residues 352–436 (IRIQTNVLND…PIHIIARARD (85 aa)) form the KH-like domain.

The protein belongs to the TRAFAC class TrmE-Era-EngA-EngB-Septin-like GTPase superfamily. EngA (Der) GTPase family. In terms of assembly, associates with the 50S ribosomal subunit.

Its function is as follows. GTPase that plays an essential role in the late steps of ribosome biogenesis. The sequence is that of GTPase Der from Bacillus cereus (strain ATCC 10987 / NRS 248).